The following is a 276-amino-acid chain: MLMITSFANPRVAQAFVDYMATQGVILTIQQHNQSDVWLADESQAERVRAELARFLENPADPRYLAASWQAGHTGSGLHYRRYPFFAALRERAGPVTWVVMIACVVVFIAMQILGDQEVMLWLAWPFDPTLKFEFWRYFTHALMHFSLMHILFNLLWWWYLGGAVEKRLGSGKLIVITLISALLSGYVQQKFSGPWFGGLSGVVYALMGYVWLRGERDPQSGIYLQRGLIIFALIWIIAGWFDLFGMSMANGAHIAGLAVGLAMAFVDSLNARKRK.

Helical transmembrane passes span 94–114 (GPVT…MQIL), 142–162 (ALMH…WYLG), 169–189 (LGSG…GYVQ), 192–212 (FSGP…GYVW), 229–249 (LIIF…GMSM), and 250–270 (ANGA…VDSL). The Nucleophile role is filled by Ser201. The active site involves His254.

This sequence belongs to the peptidase S54 family.

It localises to the cell inner membrane. The catalysed reaction is Cleaves type-1 transmembrane domains using a catalytic dyad composed of serine and histidine that are contributed by different transmembrane domains.. In terms of biological role, rhomboid-type serine protease that catalyzes intramembrane proteolysis. This Shigella boydii serotype 4 (strain Sb227) protein is Rhomboid protease GlpG.